A 90-amino-acid chain; its full sequence is RING finger protein Z (90 aa).

Glycine 2 carries the N-myristoyl glycine; by host lipid modification. The RING-type; atypical zinc finger occupies 32–68 (CKSCWQKFDSLVRCHDHYLCRHCLNLLLSVSDRCPLC). Positions 85 to 88 (PPPY) match the PPXY motif motif.

The protein belongs to the arenaviridae Z protein family. As to quaternary structure, interacts with protein NP; this interaction probably directs the encapsidated genome to budding sites. Interacts (via RING-type zinc finger) with polymerase L; this interaction inhibits viral transcription and replication, Z partially blocks the product exit tunnel for the releasing nascent RNA product. Interacts with the glycoprotein complex; this interaction plays a role in virion budding. Interacts (via RING-type zinc finger) with host EIF4E; this interaction results in conformational changes of both interacting proteins and reduces EIF4E affinity for its substrate, the 5'-m7 G cap structure. Interacts (via late-budding domain) with host TSG101; this interaction is essential for budding and release of viral particles. Interacts with host RPLP0; this interaction may serve to load ribosome-like particles inside the virion. Interacts with host PML; this interaction induces PML bodies redistribution in the cytoplasm upon viral infection. In terms of processing, myristoylation is required for the role of RING finger protein Z in assembly and budding.

The protein resides in the virion. It is found in the host cytoplasm. It localises to the host perinuclear region. Its subcellular location is the host cell membrane. Its function is as follows. Plays a crucial role in virion assembly and budding. Expressed late in the virus life cycle, it acts as an inhibitor of viral transcription and RNA synthesis by interacting with the viral polymerase L. Presumably recruits the NP encapsidated genome to cellular membranes at budding sites via direct interaction with NP. Plays critical roles in the final steps of viral release by interacting with host TSG101, a member of the vacuolar protein-sorting pathway and using other cellular host proteins involved in vesicle formation pathway. The budding of the virus progeny occurs after association of protein Z with the viral glycoprotein complex SSP-GP1-GP2 at the cell periphery, step that requires myristoylation of protein Z. Also selectively represses protein production by associating with host EIF4E. In cell-based minigenome assay, has an inhibitory effect on the ribonucleoprotein machinery (vRNP), which is responsible for the replication and transcription of the viral genome. The protein is RING finger protein Z of Homo sapiens (Human).